The primary structure comprises 100 residues: Integration host factor subunit alpha (100 aa).

Positions 53–72 (FDLRDKRQRPGRNPKTGEEI) are disordered.

Belongs to the bacterial histone-like protein family. In terms of assembly, heterodimer of an alpha and a beta chain.

This protein is one of the two subunits of integration host factor, a specific DNA-binding protein that functions in genetic recombination as well as in transcriptional and translational control. This chain is Integration host factor subunit alpha, found in Pseudomonas entomophila (strain L48).